The following is a 526-amino-acid chain: GMP synthase [glutamine-hydrolyzing] (526 aa).

The Glutamine amidotransferase type-1 domain occupies 9 to 208 (RILILDFGSQ…VKDICGCECL (200 aa)). The active-site Nucleophile is C86. Catalysis depends on residues H182 and E184. A GMPS ATP-PPase domain is found at 209–401 (WTPATIIDDA…LGLPYDMLYR (193 aa)). 236-242 (SGGVDSS) is a binding site for ATP.

Homodimer.

It catalyses the reaction XMP + L-glutamine + ATP + H2O = GMP + L-glutamate + AMP + diphosphate + 2 H(+). It functions in the pathway purine metabolism; GMP biosynthesis; GMP from XMP (L-Gln route): step 1/1. Catalyzes the synthesis of GMP from XMP. This is GMP synthase [glutamine-hydrolyzing] from Aeromonas salmonicida (strain A449).